The sequence spans 278 residues: Glutamate racemase (278 aa).

Residues 13–14 and 45–46 contribute to the substrate site; these read DS and YG. The Proton donor/acceptor role is filled by Cys76. 77–78 serves as a coordination point for substrate; it reads NT. Catalysis depends on Cys185, which acts as the Proton donor/acceptor. Residue 186–187 coordinates substrate; that stretch reads TH.

Belongs to the aspartate/glutamate racemases family.

The enzyme catalyses L-glutamate = D-glutamate. It participates in cell wall biogenesis; peptidoglycan biosynthesis. Provides the (R)-glutamate required for cell wall biosynthesis. This Gloeothece citriformis (strain PCC 7424) (Cyanothece sp. (strain PCC 7424)) protein is Glutamate racemase.